The following is a 304-amino-acid chain: 4-diphosphocytidyl-2-C-methyl-D-erythritol kinase (304 aa).

Residue K20 is part of the active site. 106–116 serves as a coordination point for ATP; the sequence is PVASGIGGGSG. D148 is an active-site residue.

Belongs to the GHMP kinase family. IspE subfamily.

The catalysed reaction is 4-CDP-2-C-methyl-D-erythritol + ATP = 4-CDP-2-C-methyl-D-erythritol 2-phosphate + ADP + H(+). The protein operates within isoprenoid biosynthesis; isopentenyl diphosphate biosynthesis via DXP pathway; isopentenyl diphosphate from 1-deoxy-D-xylulose 5-phosphate: step 3/6. Catalyzes the phosphorylation of the position 2 hydroxy group of 4-diphosphocytidyl-2C-methyl-D-erythritol. This chain is 4-diphosphocytidyl-2-C-methyl-D-erythritol kinase, found in Bartonella bacilliformis (strain ATCC 35685 / KC583 / Herrer 020/F12,63).